The chain runs to 168 residues: Lipoprotein signal peptidase (168 aa).

4 consecutive transmembrane segments (helical) span residues 15 to 35 (WLWLALVVFLADIGIKFIVME), 47 to 67 (VLPFFNLLYVHNYGAAFSFLS), 75 to 95 (WLFTGIAFVVTGLLTYWMSKL), and 107 to 127 (AMIIGGAIGNVFDRMVHGFVV). Residues aspartate 128 and aspartate 146 contribute to the active site. The chain crosses the membrane as a helical span at residues 141 to 161 (AFNLADTAICLGAAMIILDGF).

This sequence belongs to the peptidase A8 family.

It is found in the cell inner membrane. The catalysed reaction is Release of signal peptides from bacterial membrane prolipoproteins. Hydrolyzes -Xaa-Yaa-Zaa-|-(S,diacylglyceryl)Cys-, in which Xaa is hydrophobic (preferably Leu), and Yaa (Ala or Ser) and Zaa (Gly or Ala) have small, neutral side chains.. The protein operates within protein modification; lipoprotein biosynthesis (signal peptide cleavage). Functionally, this protein specifically catalyzes the removal of signal peptides from prolipoproteins. The sequence is that of Lipoprotein signal peptidase from Vibrio vulnificus (strain CMCP6).